A 239-amino-acid polypeptide reads, in one-letter code: Phosphoadenosine 5'-phosphosulfate reductase (239 aa).

The active-site Nucleophile; cysteine thiosulfonate intermediate is Cys235.

It belongs to the PAPS reductase family. CysH subfamily.

It localises to the cytoplasm. It catalyses the reaction [thioredoxin]-disulfide + sulfite + adenosine 3',5'-bisphosphate + 2 H(+) = [thioredoxin]-dithiol + 3'-phosphoadenylyl sulfate. Its pathway is sulfur metabolism; hydrogen sulfide biosynthesis; sulfite from sulfate: step 3/3. Functionally, catalyzes the formation of sulfite from phosphoadenosine 5'-phosphosulfate (PAPS) using thioredoxin as an electron donor. The protein is Phosphoadenosine 5'-phosphosulfate reductase of Thiocapsa roseopersicina.